Reading from the N-terminus, the 466-residue chain is Ribulose bisphosphate carboxylase large chain (466 aa).

N6,N6,N6-trimethyllysine is present on lysine 5. Asparagine 114 and threonine 164 together coordinate substrate. Lysine 166 (proton acceptor) is an active-site residue. Lysine 168 contributes to the substrate binding site. Mg(2+) is bound by residues lysine 192, aspartate 194, and glutamate 195. At lysine 192 the chain carries N6-carboxylysine. Histidine 285 serves as the catalytic Proton acceptor. Positions 286, 318, and 370 each coordinate substrate.

Belongs to the RuBisCO large chain family. Type I subfamily. As to quaternary structure, heterohexadecamer of 8 large chains and 8 small chains; disulfide-linked. The disulfide link is formed within the large subunit homodimers. It depends on Mg(2+) as a cofactor. The disulfide bond which can form in the large chain dimeric partners within the hexadecamer appears to be associated with oxidative stress and protein turnover.

The protein localises to the plastid. It is found in the chloroplast. It carries out the reaction 2 (2R)-3-phosphoglycerate + 2 H(+) = D-ribulose 1,5-bisphosphate + CO2 + H2O. The enzyme catalyses D-ribulose 1,5-bisphosphate + O2 = 2-phosphoglycolate + (2R)-3-phosphoglycerate + 2 H(+). In terms of biological role, ruBisCO catalyzes two reactions: the carboxylation of D-ribulose 1,5-bisphosphate, the primary event in carbon dioxide fixation, as well as the oxidative fragmentation of the pentose substrate in the photorespiration process. Both reactions occur simultaneously and in competition at the same active site. The sequence is that of Ribulose bisphosphate carboxylase large chain from Moringa oleifera (Horseradish tree).